The sequence spans 272 residues: Nitrogenase iron protein (272 aa).

An ATP-binding site is contributed by 8-15 (GKGGIGKS). Cys94 contacts [4Fe-4S] cluster. ADP-ribosylarginine; by dinitrogenase reductase ADP-ribosyltransferase is present on Arg97. Cys129 contributes to the [4Fe-4S] cluster binding site.

This sequence belongs to the NifH/BchL/ChlL family. Homodimer. [4Fe-4S] cluster is required as a cofactor. Post-translationally, the reversible ADP-ribosylation of Arg-97 inactivates the nitrogenase reductase and regulates nitrogenase activity.

The catalysed reaction is N2 + 8 reduced [2Fe-2S]-[ferredoxin] + 16 ATP + 16 H2O = H2 + 8 oxidized [2Fe-2S]-[ferredoxin] + 2 NH4(+) + 16 ADP + 16 phosphate + 6 H(+). Functionally, the key enzymatic reactions in nitrogen fixation are catalyzed by the nitrogenase complex, which has 2 components: the iron protein and the molybdenum-iron protein. This Alkaliphilus metalliredigens (strain QYMF) protein is Nitrogenase iron protein.